Reading from the N-terminus, the 440-residue chain is Ribosomal protein uS12 methylthiotransferase RimO (440 aa).

The region spanning 7–117 is the MTTase N-terminal domain; that stretch reads PKISFVSLGC…VLDAVHRALP (111 aa). Cys-16, Cys-52, Cys-81, Cys-148, Cys-152, and Cys-155 together coordinate [4Fe-4S] cluster. A Radical SAM core domain is found at 134–370; the sequence is LTPRHYAYLK…MARQQKISAQ (237 aa). The 67-residue stretch at 373–439 folds into the TRAM domain; the sequence is KRKVGTRQQV…EYDLHGSVAG (67 aa).

It belongs to the methylthiotransferase family. RimO subfamily. [4Fe-4S] cluster serves as cofactor.

It is found in the cytoplasm. It catalyses the reaction L-aspartate(89)-[ribosomal protein uS12]-hydrogen + (sulfur carrier)-SH + AH2 + 2 S-adenosyl-L-methionine = 3-methylsulfanyl-L-aspartate(89)-[ribosomal protein uS12]-hydrogen + (sulfur carrier)-H + 5'-deoxyadenosine + L-methionine + A + S-adenosyl-L-homocysteine + 2 H(+). Catalyzes the methylthiolation of an aspartic acid residue of ribosomal protein uS12. The protein is Ribosomal protein uS12 methylthiotransferase RimO of Afipia carboxidovorans (strain ATCC 49405 / DSM 1227 / KCTC 32145 / OM5) (Oligotropha carboxidovorans).